The sequence spans 163 residues: Endoribonuclease YbeY (163 aa).

The Zn(2+) site is built by histidine 126, histidine 130, and histidine 136.

Belongs to the endoribonuclease YbeY family. It depends on Zn(2+) as a cofactor.

The protein resides in the cytoplasm. Its function is as follows. Single strand-specific metallo-endoribonuclease involved in late-stage 70S ribosome quality control and in maturation of the 3' terminus of the 16S rRNA. This is Endoribonuclease YbeY from Chelativorans sp. (strain BNC1).